The primary structure comprises 191 residues: Prostaglandin-H2 D-isomerase (191 aa).

Positions 1–28 (MATPNRLWMALLLLGVLGVLQTPAPAQA) are cleaved as a signal peptide. The N-linked (GlcNAc...) asparagine glycan is linked to Asn-51. The Nucleophile role is filled by Cys-65. N-linked (GlcNAc...) asparagine glycosylation is present at Asn-78. An intrachain disulfide couples Cys-89 to Cys-186.

Belongs to the calycin superfamily. Lipocalin family. Monomer. In the male reproductive system, expressed in the testis, epididymis and prostate, and secreted into the seminal fluid.

It localises to the rough endoplasmic reticulum. Its subcellular location is the nucleus membrane. The protein localises to the golgi apparatus. It is found in the cytoplasm. The protein resides in the perinuclear region. It localises to the secreted. The enzyme catalyses prostaglandin H2 = prostaglandin D2. In terms of biological role, catalyzes the conversion of PGH2 to PGD2, a prostaglandin involved in smooth muscle contraction/relaxation and a potent inhibitor of platelet aggregation. Involved in a variety of CNS functions, such as sedation, NREM sleep and PGE2-induced allodynia, and may have an anti-apoptotic role in oligodendrocytes. Binds small non-substrate lipophilic molecules, including biliverdin, bilirubin, retinal, retinoic acid and thyroid hormone, and may act as a scavenger for harmful hydrophobic molecules and as a secretory retinoid and thyroid hormone transporter. Possibly involved in development and maintenance of the blood-brain, blood-retina, blood-aqueous humor and blood-testis barrier. It is likely to play important roles in both maturation and maintenance of the central nervous system and male reproductive system. Involved in PLA2G3-dependent maturation of mast cells. PLA2G3 is secreted by immature mast cells and acts on nearby fibroblasts upstream to PTDGS to synthesize PGD2, which in turn promotes mast cell maturation and degranulation via PTGDR. In Bos taurus (Bovine), this protein is Prostaglandin-H2 D-isomerase (PTGDS).